A 257-amino-acid polypeptide reads, in one-letter code: Protein vip1 (257 aa).

In terms of domain architecture, RRM spans 3–76 (NQVIVTNISP…NKIQITSEDG (74 aa)). Residues 74 to 99 (EDGGAASTTDQGGAGGDQAARQEDKP) form a disordered region. A compositionally biased stretch (low complexity) spans 75-84 (DGGAASTTDQ). Phosphoserine is present on residues serine 132 and serine 177. Residues 217–257 (ARRLADAKNQAEGTASPASSTPTAPAEKEPTAPTTESKTTE) form a disordered region. Threonine 230 is subject to Phosphothreonine. Over residues 230–257 (TASPASSTPTAPAEKEPTAPTTESKTTE) the composition is skewed to low complexity. Phosphoserine is present on residues serine 232 and serine 235.

In Schizosaccharomyces pombe (strain 972 / ATCC 24843) (Fission yeast), this protein is Protein vip1 (vip1).